Here is a 635-residue protein sequence, read N- to C-terminus: 1-deoxy-D-xylulose-5-phosphate synthase (635 aa).

Thiamine diphosphate-binding positions include H78 and G119–S121. D151 provides a ligand contact to Mg(2+). Thiamine diphosphate contacts are provided by residues G152–A153, N180, Y289, and E371. Residue N180 participates in Mg(2+) binding.

It belongs to the transketolase family. DXPS subfamily. As to quaternary structure, homodimer. The cofactor is Mg(2+). Requires thiamine diphosphate as cofactor.

It catalyses the reaction D-glyceraldehyde 3-phosphate + pyruvate + H(+) = 1-deoxy-D-xylulose 5-phosphate + CO2. Its pathway is metabolic intermediate biosynthesis; 1-deoxy-D-xylulose 5-phosphate biosynthesis; 1-deoxy-D-xylulose 5-phosphate from D-glyceraldehyde 3-phosphate and pyruvate: step 1/1. Catalyzes the acyloin condensation reaction between C atoms 2 and 3 of pyruvate and glyceraldehyde 3-phosphate to yield 1-deoxy-D-xylulose-5-phosphate (DXP). The sequence is that of 1-deoxy-D-xylulose-5-phosphate synthase from Bartonella tribocorum (strain CIP 105476 / IBS 506).